Consider the following 541-residue polypeptide: Arginine--tRNA ligase (541 aa).

The 'HIGH' region motif lies at 119 to 129 (ANPTGPLHIGH).

The protein belongs to the class-I aminoacyl-tRNA synthetase family. In terms of assembly, monomer.

The protein resides in the cytoplasm. The catalysed reaction is tRNA(Arg) + L-arginine + ATP = L-arginyl-tRNA(Arg) + AMP + diphosphate. This Helicobacter pylori (strain J99 / ATCC 700824) (Campylobacter pylori J99) protein is Arginine--tRNA ligase (argS).